Consider the following 74-residue polypeptide: Large ribosomal subunit protein bL31 (74 aa).

Zn(2+) is bound by residues Cys16, Cys18, Cys38, and Cys41.

The protein belongs to the bacterial ribosomal protein bL31 family. Type A subfamily. Part of the 50S ribosomal subunit. Zn(2+) serves as cofactor.

Binds the 23S rRNA. The protein is Large ribosomal subunit protein bL31 of Mycobacteroides abscessus (strain ATCC 19977 / DSM 44196 / CCUG 20993 / CIP 104536 / JCM 13569 / NCTC 13031 / TMC 1543 / L948) (Mycobacterium abscessus).